Here is a 444-residue protein sequence, read N- to C-terminus: Aspartate--tRNA(Asp/Asn) ligase (444 aa).

Glu176 contributes to the L-aspartate binding site. The tract at residues 198–201 is aspartate; that stretch reads QLFK. Arg220 lines the L-aspartate pocket. ATP is bound by residues 220–222, 228–230, and Glu367; these read RAE and RHL. Mg(2+) contacts are provided by Glu367 and Ser370. L-aspartate-binding residues include Ser370 and Arg374. Residue 415-418 coordinates ATP; it reads GCER.

The protein belongs to the class-II aminoacyl-tRNA synthetase family. Type 2 subfamily. Homodimer. It depends on Mg(2+) as a cofactor.

The protein resides in the cytoplasm. The catalysed reaction is tRNA(Asx) + L-aspartate + ATP = L-aspartyl-tRNA(Asx) + AMP + diphosphate. Aspartyl-tRNA synthetase with relaxed tRNA specificity since it is able to aspartylate not only its cognate tRNA(Asp) but also tRNA(Asn). Reaction proceeds in two steps: L-aspartate is first activated by ATP to form Asp-AMP and then transferred to the acceptor end of tRNA(Asp/Asn). The sequence is that of Aspartate--tRNA(Asp/Asn) ligase from Methanosarcina acetivorans (strain ATCC 35395 / DSM 2834 / JCM 12185 / C2A).